The primary structure comprises 2006 residues: Supporter of activation of yellow protein (2006 aa).

Disordered stretches follow at residues 1-208 (MNDL…RRVE), 313-347 (MPAKNDAHLSSLSPASASSSSASSSSSSSSSSSLA), 458-564 (EEKP…AQSQ), 744-794 (DTQD…DPAR), 821-916 (DLEG…KSRR), 929-1029 (VSVG…NNNS), 1044-1082 (CSSSSSTSSGAAANQQVIGGSGSSSMLPPTTILSSSDPL), and 1099-1196 (QQLR…SAVA). Residues 10–60 (VAATSSSGSESGTAVESAAATSTAGSAGAAGRPQSNCSANSNAKSVAASST) are compositionally biased toward low complexity. Over residues 67–81 (VSSTSSPAQRDQQLN) the composition is skewed to polar residues. The segment covering 118–128 (SPPPTLPPPTT) has biased composition (pro residues). Positions 129 to 168 (PCDDAPSTTGASASASSASGEAPSAASAAGAAGGPMAATA) are enriched in low complexity. A compositionally biased stretch (polar residues) spans 189 to 199 (ANPNSNANESQ). The segment covering 321 to 347 (LSSLSPASASSSSASSSSSSSSSSSLA) has biased composition (low complexity). A compositionally biased stretch (polar residues) spans 485–494 (GGESNSSSQE). Positions 525–534 (SLSKEHDPKI) are enriched in basic and acidic residues. Low complexity predominate over residues 543-563 (ASNGIASGGSKASKASKSAQS). Residues 744–758 (DTQDNNNENHLKRTN) show a composition bias toward basic and acidic residues. Polar residues-rich tracts occupy residues 759–769 (SEGNESPSSRL) and 828–844 (PPTQQQSISTPDQNGAL). Residues 861–870 (PATPQPPPVA) are compositionally biased toward pro residues. 2 stretches are compositionally biased toward basic and acidic residues: residues 936-945 (ADMKAKEKES) and 963-972 (ESPKTRDHRP). Low complexity-rich tracts occupy residues 978 to 990 (RTTTSTNTNLQPT) and 1018 to 1029 (SSESESNNNNNS). Residues 1053-1080 (GAAANQQVIGGSGSSSMLPPTTILSSSD) are compositionally biased toward polar residues. Positions 1103 to 1112 (SSRPSSISCG) are enriched in low complexity. A compositionally biased stretch (basic residues) spans 1147–1158 (GRGRGRRSRGGR). Over residues 1161–1173 (GSSSVDRAVSVGG) the composition is skewed to low complexity. The tract at residues 1340 to 1573 (MIQEQVALYL…PPTDLMAQLL (234 aa)) is SAY. The disordered stretch occupies residues 1579–1685 (AVGSDEIKTS…AGSEDEDGNE (107 aa)). 2 stretches are compositionally biased toward low complexity: residues 1627–1652 (TASSSSTSSAQSVSSASSGNGSSSDT) and 1660–1677 (FSSTSSCSSSTGASSGAG). The segment at 1694–1751 (TCGVCLRSQHRNARDMPEAFIRCYTCRKRVHPSCVDMPPRMVGRVRNYNWQCAGCKCC) adopts a PHD-type 1; degenerate zinc-finger fold. A PHD-type 2; degenerate zinc finger spans residues 1753–1796 (KCRSSQRPGKMLYCEQCDRGYHIYCLGLRTVPDGRWSCERCCFC). Positions 1887 to 1911 (TSAQTDDSPMPSPGLTTNGGRALSP) are disordered.

It belongs to the SAYP family. Widely expressed. Highly expressed in ovary. Expressed in nursing cells and growing oocytes at all stages of development and accumulates in mature oocytes. Expressed in the nuclei of syncytium blastoderm of early embryos and in the nuclei of different tissues of late embryos, larvae, and adults.

It localises to the nucleus. The protein resides in the cytoplasm. It is found in the chromosome. Essential transcription regulator during early development. Coactivates transcription of some euchromatin genes and repress transcription in of euchromatin genes translocated to heterochromatin. This is Supporter of activation of yellow protein (e(y)3) from Drosophila melanogaster (Fruit fly).